Consider the following 574-residue polypeptide: NADH-ubiquinone oxidoreductase chain 5 (574 aa).

The next 16 helical transmembrane spans lie at V10 to V30, M50 to I70, F87 to F107, L111 to Y131, G141 to W161, Y181 to L203, T211 to I231, V240 to L260, L280 to V300, T301 to M321, T340 to Y360, L381 to V401, M423 to L443, T458 to M478, I489 to M509, and T554 to I574.

This sequence belongs to the complex I subunit 5 family.

Its subcellular location is the mitochondrion inner membrane. The enzyme catalyses a ubiquinone + NADH + 5 H(+)(in) = a ubiquinol + NAD(+) + 4 H(+)(out). Functionally, core subunit of the mitochondrial membrane respiratory chain NADH dehydrogenase (Complex I) that is believed to belong to the minimal assembly required for catalysis. Complex I functions in the transfer of electrons from NADH to the respiratory chain. The immediate electron acceptor for the enzyme is believed to be ubiquinone. This chain is NADH-ubiquinone oxidoreductase chain 5 (ND5), found in Lumbricus terrestris (Common earthworm).